The primary structure comprises 169 residues: Transcription antitermination protein NusB (169 aa).

Positions 1-19 are enriched in basic and acidic residues; the sequence is MAEMKKTIDNKPAPKGEKK. The disordered stretch occupies residues 1–22; it reads MAEMKKTIDNKPAPKGEKKANR.

This sequence belongs to the NusB family.

In terms of biological role, involved in transcription antitermination. Required for transcription of ribosomal RNA (rRNA) genes. Binds specifically to the boxA antiterminator sequence of the ribosomal RNA (rrn) operons. This chain is Transcription antitermination protein NusB, found in Rhodopseudomonas palustris (strain BisB18).